The chain runs to 460 residues: A-type ATP synthase subunit B (460 aa).

It belongs to the ATPase alpha/beta chains family. Has multiple subunits with at least A(3), B(3), C, D, E, F, H, I and proteolipid K(x).

Its subcellular location is the cell membrane. Functionally, component of the A-type ATP synthase that produces ATP from ADP in the presence of a proton gradient across the membrane. The B chain is a regulatory subunit. The sequence is that of A-type ATP synthase subunit B from Methanosarcina barkeri.